We begin with the raw amino-acid sequence, 405 residues long: Envelope glycoprotein M (405 aa).

At 1–17 (MKSSKNDTFVYRTWVKT) the chain is on the intravirion side. Residues 18-38 (LVVYFVMFVMSAVVPITAMFP) traverse the membrane as a helical segment. Topologically, residues 39-76 (NLGYPCYFNALVDYGALNLTNYNLAHHLTPTLYLEPPE) are virion surface. Residues 77-97 (MFVYITLVFIADCVAFIYYAC) form a helical membrane-spanning segment. Topologically, residues 98–121 (GEVALIKARKKVSGLTDLSAWVSA) are intravirion. The helical transmembrane segment at 122 to 142 (VGSPTVLFLAILKLWSIQVFI) threads the bilayer. Residues 143 to 149 (QVLSYKH) lie on the Virion surface side of the membrane. The helical transmembrane segment at 150-170 (VFLSAFVYFLHFLASVLHACA) threads the bilayer. Residues 171–192 (CVTRFSPVWVVKAQDNSIPQDT) are Intravirion-facing. A helical transmembrane segment spans residues 193-215 (FLWWVVFYLKPVVTNLYLGCLAL). Over 216-245 (ETLVFSLSVFLALGNSFYFMVGDMVLGAVN) the chain is Virion surface. A helical transmembrane segment spans residues 246–266 (LFLILPIFWYILTEVWLASFM). R267 is a topological domain (intravirion). Residues 268–288 (HNFGFYCGMFIASIILILPLV) traverse the membrane as a helical segment. At 289-299 (RYEAVFVSAKL) the chain is on the virion surface side. Residues 300-320 (HTTVAINVAIIPILCSVAMLI) traverse the membrane as a helical segment. The Intravirion segment spans residues 321–405 (RICRIFKSMR…TTDSEEEIFP (85 aa)). The tract at residues 346–405 (LESEPRPRPSRTPSPGRNRRRSSTSSSSSRSTRRQRPVSTQALVSSVLPMTTDSEEEIFP) is disordered. Over residues 386–397 (QALVSSVLPMTT) the composition is skewed to polar residues.

Belongs to the herpesviridae glycoprotein M family. As to quaternary structure, interacts (via N-terminus) with gN (via N-terminus). The gM-gN heterodimer forms the gCII complex.

It is found in the virion membrane. The protein localises to the host Golgi apparatus. Its subcellular location is the host trans-Golgi network. It localises to the host endosome membrane. The protein resides in the host nucleus inner membrane. Functionally, envelope glycoprotein important for virion assembly and egress. Plays a role in the correct incorporation of gH-gL into virion membrane. Directs the glycoprotein N (gN) to the host trans-Golgi network. This is Envelope glycoprotein M from Epstein-Barr virus (strain GD1) (HHV-4).